The following is a 327-amino-acid chain: tRNA uridine(34) hydroxylase (327 aa).

The Rhodanese domain maps to 123–217 (SDPEVLVVDT…YLEEVPQEQS (95 aa)). The active-site Cysteine persulfide intermediate is C177.

This sequence belongs to the TrhO family.

It catalyses the reaction uridine(34) in tRNA + AH2 + O2 = 5-hydroxyuridine(34) in tRNA + A + H2O. Functionally, catalyzes oxygen-dependent 5-hydroxyuridine (ho5U) modification at position 34 in tRNAs. In Vibrio cholerae serotype O1 (strain ATCC 39315 / El Tor Inaba N16961), this protein is tRNA uridine(34) hydroxylase.